The following is a 144-amino-acid chain: Large ribosomal subunit protein uL15 (144 aa).

Positions 1-14 (MVVRREKKSRKMRG) are enriched in basic residues. Residues 1 to 35 (MVVRREKKSRKMRGSRTMGWGIRGQHRDRGSQGGR) are disordered.

Belongs to the universal ribosomal protein uL15 family. In terms of assembly, part of the 50S ribosomal subunit.

Functionally, binds to the 23S rRNA. The polypeptide is Large ribosomal subunit protein uL15 (Saccharolobus solfataricus (strain ATCC 35092 / DSM 1617 / JCM 11322 / P2) (Sulfolobus solfataricus)).